The sequence spans 572 residues: MPRKMYSCDFETTTKVEDCRVWAYGYMNIEDHSEYKIGNSLDEFMAWVLKVQADLYFHNLKFDGAFIINWLERNGFKWSADGLPNTYNTIISRMGQWYMIDICLGYKGKRKIHTVIYDSLKKLPFPVKKIAKDFKLTVLKGDIDYHKERPVGYEITPDEYAYIKNDIQIIAEALLIQFKQGLDRMTAGSDDLKGFKDIITTKKFKKVFPTLSLGLDKEVRYAYRGGFTWLNDRFKEKEIGEGMVFDVNSLYPAQMYSRLLPYGEPIVFEGKYVWDEDYPLHIQHIRCEFELKEGYIPTIQIKRSRFYKGNEYLKSSGGEIADLWVSNVDLELMKEHYDLYNVEYISGLKFKATTGLFKDFIDKWTHIKTTSEGAIKQLAKLMLNSLYGKFASNPDVTGKVPYLKENGALGFRLGEEETKDPVYTPMGVFITAWARYTTITAAQACFDRIIYCDTDSIHLTGTEIPDVIKDIVDPKKLGYWAHESTFKRAKYLRQKTYIQDIYMKEVDGKLVEGSPDDYTTIKFSVKCAGMTDKIKKEVTFENFKVGFSRKMKPKPVQVPGGVVLVDDTFTIK.

Residues 1-222 (MPRKMYSCDF…LGLDKEVRYA (222 aa)) are 3'-5' exonuclease and strand displacement activities. Positions 56-66 (YFHNLKFDGAF) are interaction with the primer terminal protein. Residues D142 and D166 each coordinate Mg(2+). Positions 223–226 (YRGG) are DNA-binding; Involved in the formation of a stable complex between TP and phi29 DNA polymerase. The initiation, polymerization and pyrophosphorolytic activities stretch occupies residues 227-572 (FTWLNDRFKE…VLVDDTFTIK (346 aa)). Mg(2+)-binding residues include D246 and V247. 3 residues coordinate 5-methyl-UTP: Y251, K368, and K380. The Mg(2+) site is built by D453 and D455. Position 455 (D455) interacts with 5-methyl-UTP.

It belongs to the DNA polymerase type-B family. Interacts with the primer terminal protein; this interaction allows the initiation of TP-primed DNA replication at both viral DNA ends. Interacts with DNA. It depends on Mg(2+) as a cofactor.

It catalyses the reaction DNA(n) + a 2'-deoxyribonucleoside 5'-triphosphate = DNA(n+1) + diphosphate. In terms of biological role, polymerase responsible for protein-primed viral DNA replication by strand displacement with high processivity and fidelity. To start replication, the DNA polymerase forms a heterodimer with a free primer terminal protein (TP), recognizes the replication origins at both 5' ends of the linear chromosome, and initiates replication using as primer the OH-group of Ser-232 of the TP. This polymerase possesses three enzymatic activities: DNA synthesis (polymerase), primer terminal protein (TP) deoxynucleotidylation, which is the formation of a covalent linkage (phosphoester) between the hydroxyl group of a specific serine residue in TP and 5'-dAMP, a reaction directed by the second T at the 3' end, and 3' to 5' exonuclease activity. Exonuclease activity has a proofreading purpose. The polypeptide is DNA polymerase (2) (Bacillus subtilis (Bacteriophage PZA)).